We begin with the raw amino-acid sequence, 177 residues long: Mitochondrial inner membrane protease subunit 2 (177 aa).

The helical transmembrane segment at 19–37 (FFVAVPVAVTFLDRVACVA) threads the bilayer. Residues Ser43 and Lys91 contribute to the active site.

Belongs to the peptidase S26 family. IMP2 subfamily. As to quaternary structure, heterodimer of 2 subunits, IMMPL1 and IMMPL2.

It is found in the mitochondrion inner membrane. Functionally, catalyzes the removal of transit peptides required for the targeting of proteins from the mitochondrial matrix, across the inner membrane, into the inter-membrane space. Known to process the nuclear encoded protein DIABLO. This Bos taurus (Bovine) protein is Mitochondrial inner membrane protease subunit 2 (IMMP2L).